The chain runs to 648 residues: Acetyl-coenzyme A synthetase (648 aa).

Residues 191–194, Thr-310, and Asn-334 each bind CoA; that span reads RGGR. ATP is bound by residues 386–388, 410–415, Asp-499, and Arg-514; these read GEP and DTWWQT. Ser-522 is a CoA binding site. Arg-525 is an ATP binding site. Positions 536, 538, and 541 each coordinate Mg(2+). Arg-583 is a binding site for CoA. The residue at position 608 (Lys-608) is an N6-acetyllysine.

The protein belongs to the ATP-dependent AMP-binding enzyme family. Mg(2+) serves as cofactor. Post-translationally, acetylated. Deacetylation by the SIR2-homolog deacetylase activates the enzyme.

The catalysed reaction is acetate + ATP + CoA = acetyl-CoA + AMP + diphosphate. Catalyzes the conversion of acetate into acetyl-CoA (AcCoA), an essential intermediate at the junction of anabolic and catabolic pathways. AcsA undergoes a two-step reaction. In the first half reaction, AcsA combines acetate with ATP to form acetyl-adenylate (AcAMP) intermediate. In the second half reaction, it can then transfer the acetyl group from AcAMP to the sulfhydryl group of CoA, forming the product AcCoA. In Aeromonas hydrophila subsp. hydrophila (strain ATCC 7966 / DSM 30187 / BCRC 13018 / CCUG 14551 / JCM 1027 / KCTC 2358 / NCIMB 9240 / NCTC 8049), this protein is Acetyl-coenzyme A synthetase.